A 274-amino-acid chain; its full sequence is 2-dehydro-3-deoxyphosphooctonate aldolase (274 aa).

It belongs to the KdsA family.

Its subcellular location is the cytoplasm. It catalyses the reaction D-arabinose 5-phosphate + phosphoenolpyruvate + H2O = 3-deoxy-alpha-D-manno-2-octulosonate-8-phosphate + phosphate. The protein operates within carbohydrate biosynthesis; 3-deoxy-D-manno-octulosonate biosynthesis; 3-deoxy-D-manno-octulosonate from D-ribulose 5-phosphate: step 2/3. Its pathway is bacterial outer membrane biogenesis; lipopolysaccharide biosynthesis. This Rickettsia typhi (strain ATCC VR-144 / Wilmington) protein is 2-dehydro-3-deoxyphosphooctonate aldolase.